The primary structure comprises 468 residues: Membrane-associated tyrosine- and threonine-specific cdc2-inhibitory kinase wee-1.1 (468 aa).

The span at 25-42 (SKDEPNKLNTSRKLEVTT) shows a compositional bias: basic and acidic residues. Residues 25 to 63 (SKDEPNKLNTSRKLEVTTKKNQSNNKKRPPPINKARKSL) are disordered. The segment covering 49–61 (NKKRPPPINKARK) has biased composition (basic residues). A Protein kinase domain is found at 106–357 (FNFDKNLGKG…SELMKNHVVK (252 aa)). ATP contacts are provided by residues 112 to 120 (LGKGSFGEV) and lysine 135. Aspartate 224 acts as the Proton acceptor in catalysis. Residues asparagine 229 and aspartate 242 each contribute to the Mg(2+) site. The tract at residues 425–453 (EDEYEVFSPPRTPVKKSRYQQTMPEVSPP) is disordered.

Belongs to the protein kinase superfamily. Ser/Thr protein kinase family. WEE1 subfamily. As to expression, in the 12-13-cell embryo, expressed in the E blastomere. In the 16-cell embryo, expressed in the eight AB cells.

The protein resides in the nucleus. The enzyme catalyses L-seryl-[protein] + ATP = O-phospho-L-seryl-[protein] + ADP + H(+). It carries out the reaction L-threonyl-[protein] + ATP = O-phospho-L-threonyl-[protein] + ADP + H(+). Its function is as follows. Acts as a negative regulator of entry into mitosis (G2 to M transition) by phosphorylation of the CDK1 kinase. The protein is Membrane-associated tyrosine- and threonine-specific cdc2-inhibitory kinase wee-1.1 (wee-1.1) of Caenorhabditis elegans.